The following is a 1325-amino-acid chain: Nephrocystin-3 (1325 aa).

The interval 1–20 (MGTASSLVSPTGGEVIEDTY) is disordered. Residue Gly2 is the site of N-myristoyl glycine attachment. Residues 107–203 (SMGRREAKLD…QRLQAQGIQV (97 aa)) are a coiled coil. TPR repeat units lie at residues 467–500 (TPEE…AHEL), 881–914 (CLLN…KGAM), 916–937 (TEYF…MLCL), 938–971 (ADLY…RETA), 980–1013 (AQSL…SENA), 1022–1055 (AREL…RQQA), 1088–1121 (ARTL…RERV), 1130–1163 (AQSL…RRRA), 1172–1205 (AYTV…RQKS), 1214–1247 (ATAL…YEDS), and 1256–1289 (GETL…KEAE). The disordered stretch occupies residues 1293-1325 (LGGKAPSRQSSSGDTFLFKTTHSPNVFLPQGQS). Residues 1299 to 1325 (SRQSSSGDTFLFKTTHSPNVFLPQGQS) are compositionally biased toward polar residues.

As to quaternary structure, interacts with NPHP1 and INVS/NPHP2. Interacts (when myristoylated) with UNC119 and UNC119B; interaction is required for localization to cilium. Interacts with CEP164. Component of a complex containing at least ANKS6, INVS, NEK8 and NPHP3. ANKS6 may organize complex assembly by linking INVS and NPHP3 to NEK8 and INVS may target the complex to the proximal ciliary axoneme.

Its subcellular location is the cell projection. It localises to the cilium. Its function is as follows. Required for normal ciliary development and function. Inhibits disheveled-1-induced canonical Wnt-signaling activity and may also play a role in the control of non-canonical Wnt signaling that regulates planar cell polarity. Probably acts as a molecular switch between different Wnt signaling pathways. Required for proper convergent extension cell movements. This is Nephrocystin-3 (Nphp3) from Mus musculus (Mouse).